The primary structure comprises 178 residues: CRISPR system ring nuclease SSO2081 (178 aa).

A transition state stabilizer region spans residues 105–106 (RK).

This sequence belongs to the cOA ring nuclease family. Homodimer. Does not require a metal cofactor. is required as a cofactor.

Its subcellular location is the cytoplasm. The enzyme catalyses cyclic tetraadenylate = 2 5'-hydroxy-diadenylate 2',3'-cylic phosphate. In terms of biological role, CRISPR (clustered regularly interspaced short palindromic repeat) is an adaptive immune system that provides protection against mobile genetic elements (viruses, transposable elements and conjugative plasmids). CRISPR clusters contain spacers, sequences complementary to antecedent mobile elements, and target invading nucleic acids. CRISPR clusters are transcribed and processed into CRISPR RNA (crRNA). A nuclease that degrades cyclic oligoadenylates (cOA), second messengers that induce an antiviral state important for defense against invading nucleic acids. Destruction of cOA deactivates the Csx1 ribonuclease, preventing uncontrolled degradation of cellular RNA. Degrades cA4 (a tetraadenylate ring) into a linear diadenylate product with 5'-OH and 2',3'-cyclic phosphate termini. Is 10-fold more active than SSO1393, suggesting this is the major cA4 degradation enzyme. Is highly specific for cA4; it has very poor activity on cA6 and no discernible activity against a number of cyclic dinucleotides. There may be 2 active sites per homodimer. This chain is CRISPR system ring nuclease SSO2081, found in Saccharolobus solfataricus (strain ATCC 35092 / DSM 1617 / JCM 11322 / P2) (Sulfolobus solfataricus).